The chain runs to 207 residues: Large ribosomal subunit protein uL4 (207 aa).

The segment at methionine 44–isoleucine 78 is disordered.

This sequence belongs to the universal ribosomal protein uL4 family. Part of the 50S ribosomal subunit.

In terms of biological role, one of the primary rRNA binding proteins, this protein initially binds near the 5'-end of the 23S rRNA. It is important during the early stages of 50S assembly. It makes multiple contacts with different domains of the 23S rRNA in the assembled 50S subunit and ribosome. Its function is as follows. Forms part of the polypeptide exit tunnel. In Geobacillus kaustophilus (strain HTA426), this protein is Large ribosomal subunit protein uL4.